Reading from the N-terminus, the 388-residue chain is MIKNPKVLILTAHYGNGHVQVAKTLEQTFRQKGIKDVIVCDLFGESHPVITDITKYLYLKSYTIGKELYRLFYYGVEKIYDKKIASWYANFGRKRLKLLLQAEKPDIVINTFPIIAVPELKKQTGISIPVYNVLTDFCVHKIWIHREVDRYFVATDHVKKVMVDIGVPAEQIVETGIPIRSSFELKINPDIIYNKYQLCKNKKILLIVAGAHGVLGSVKELCQSFMSVPDLQVVVVCGKNEALKQDLVGVQETNPDALKVFGYVENIDELFRVTSCMITKPGGITLSEAAALQVPVILYKPVPGQENENAMYFERKGAAVVIRDDSEVFAKTEALLQDDMKLLQMKEAMKSIYRPEPADHIVDTILAENHVEPNHIPIKSPALAQSFT.

This sequence belongs to the glycosyltransferase 28 family. UgtP subfamily.

Its subcellular location is the cell membrane. The catalysed reaction is a 1,2-diacyl-3-O-(beta-D-glucopyranosyl)-sn-glycerol + UDP-alpha-D-glucose = a 1,2-diacyl-3-O-(beta-D-Glc-(1-&gt;6)-beta-D-Glc)-sn-glycerol + UDP + H(+). It carries out the reaction a 1,2-diacyl-3-O-(beta-D-Glc-(1-&gt;6)-beta-D-Glc)-sn-glycerol + UDP-alpha-D-glucose = a 1,2-diacyl-3-O-(beta-D-Glc-(1-&gt;6)-beta-D-Glc-(1-&gt;6)-beta-D-Glc)-sn-glycerol + UDP + H(+). The enzyme catalyses a 1,2-diacyl-sn-glycerol + UDP-alpha-D-glucose = a 1,2-diacyl-3-O-(beta-D-glucopyranosyl)-sn-glycerol + UDP + H(+). The protein operates within glycolipid metabolism; diglucosyl-diacylglycerol biosynthesis. Its function is as follows. Processive glucosyltransferase involved in the biosynthesis of both the bilayer- and non-bilayer-forming membrane glucolipids. Is able to successively transfer up to three glucosyl residues to diacylglycerol (DAG), thereby catalyzing the formation of beta-monoglucosyl-DAG (3-O-(beta-D-glucopyranosyl)-1,2-diacyl-sn-glycerol), beta-diglucosyl-DAG (3-O-(beta-D-glucopyranosyl-beta-(1-&gt;6)-D-glucopyranosyl)-1,2-diacyl-sn-glycerol) and beta-triglucosyl-DAG (3-O-(beta-D-glucopyranosyl-beta-(1-&gt;6)-D-glucopyranosyl-beta-(1-&gt;6)-D-glucopyranosyl)-1,2-diacyl-sn-glycerol). Beta-diglucosyl-DAG is the predominant glycolipid found in Bacillales and is also used as a membrane anchor for lipoteichoic acid (LTA). The protein is Processive diacylglycerol beta-glucosyltransferase of Bacillus anthracis (strain A0248).